The sequence spans 300 residues: Homoserine kinase (300 aa).

87–97 (PISRGLGSSSA) contributes to the ATP binding site.

Belongs to the GHMP kinase family. Homoserine kinase subfamily.

It is found in the cytoplasm. The enzyme catalyses L-homoserine + ATP = O-phospho-L-homoserine + ADP + H(+). It functions in the pathway amino-acid biosynthesis; L-threonine biosynthesis; L-threonine from L-aspartate: step 4/5. Its function is as follows. Catalyzes the ATP-dependent phosphorylation of L-homoserine to L-homoserine phosphate. In Clostridium kluyveri (strain ATCC 8527 / DSM 555 / NBRC 12016 / NCIMB 10680 / K1), this protein is Homoserine kinase.